Reading from the N-terminus, the 3010-residue chain is Genome polyprotein (3010 aa).

At Ser2 the chain carries N-acetylserine; by host. An interaction with STAT1 region spans residues 2–23 (STNPKPQRKTKRNTNRRPQDVK). The tract at residues 2–58 (STNPKPQRKTKRNTNRRPQDVKFPGGGQIVGGVYLLPRRGPRLGVRATRKTSERSQP) is interaction with EIF2AK2/PKR. The interval 2–59 (STNPKPQRKTKRNTNRRPQDVKFPGGGQIVGGVYLLPRRGPRLGVRATRKTSERSQPR) is interaction with DDX3X. The interval 2-75 (STNPKPQRKT…PKARQPEGRA (74 aa)) is disordered. The Cytoplasmic portion of the chain corresponds to 2-168 (STNPKPQRKT…EDGVNYATGN (167 aa)). 2 consecutive short sequence motifs (nuclear localization signal) follow at residues 5–13 (PKPQRKTKR) and 38–43 (PRRGPR). Positions 7 to 16 (PQRKTKRNTN) are enriched in basic residues. Positions 32–47 (GGVYLLPRRGPRLGVR) are enriched in low complexity. Residue Ser53 is modified to Phosphoserine; by host. 2 consecutive short sequence motifs (nuclear localization signal) follow at residues 58–64 (PRGRRQP) and 66–71 (PKARQP). Ser99 carries the phosphoserine; by host modification. The interval 112 to 152 (PRRRSRNLGKVIDTLTCGFADLMGYIPLVGAPLGGAARALA) is important for endoplasmic reticulum and mitochondrial localization. A Phosphoserine; by host PKA modification is found at Ser116. The interval 122–173 (VIDTLTCGFADLMGYIPLVGAPLGGAARALAHGVRVLEDGVNYATGNLPGCS) is interaction with APOA2. The interval 164 to 167 (YATG) is important for lipid droplets localization. A helical transmembrane segment spans residues 169–189 (LPGCSFSIFLLALLSCLTIPA). The propeptide at 178–191 (LLALLSCLTIPASA) is ER anchor for the core protein, removed in mature form by host signal peptidase. Over 190–358 (SAYEVRNVSG…AGAHWGVLAG (169 aa)) the chain is Lumenal. Asn196, Asn209, Asn234, and Asn250 each carry an N-linked (GlcNAc...) asparagine; by host glycan. The interval 265–296 (LVGAAALCSAMYVGDLCGSVFLVAQLFTFSPR) is important for fusion. N-linked (GlcNAc...) asparagine; by host glycosylation is present at Asn305. Residues 359 to 379 (LAYYSMVGNWAKVLIVMLLFA) traverse the membrane as a helical segment. Over 380-725 (GVDGGTYVTG…WEYVLLLFLL (346 aa)) the chain is Lumenal. The HVR1 stretch occupies residues 385 to 411 (TYVTGGTMAKNTLGITSLFSPGSSQKI). N-linked (GlcNAc...) asparagine; by host glycosylation occurs at Asn417. Residues Asn423, Asn430, and Asn448 are each glycosylated (N-linked (GlcNAc...) (high mannose) asparagine; by host). 4 cysteine pairs are disulfide-bonded: Cys429–Cys552, Cys452–Cys459, Cys486–Cys494, and Cys503–Cys508. The HVR2 stretch occupies residues 474–482 (YNESHSSDQ). The interval 480-493 (SDQRPYCWHYAPRP) is CD81-binding 1. A glycan (N-linked (GlcNAc...) (high mannose) asparagine; by host) is linked at Asn532. Positions 544 to 551 (PPQGNWFG) are CD81-binding 2. Asn556 carries an N-linked (GlcNAc...) (high mannose) asparagine; by host glycan. Cysteines 564 and 569 form a disulfide. The N-linked (GlcNAc...) (high mannose) asparagine; by host glycan is linked to Asn576. Intrachain disulfides connect Cys581–Cys585, Cys597–Cys620, and Cys607–Cys644. Asn623 and Asn645 each carry an N-linked (GlcNAc...) (high mannose) asparagine; by host glycan. An intrachain disulfide couples Cys652 to Cys677. The tract at residues 660-671 (SELSPLLLSTTE) is EIF2AK2/eIF2-alpha phosphorylation homology domain (PePHD). Residues 726 to 746 (LADARVCACLWMMLLIAQAEA) traverse the membrane as a helical segment. Residues 747-757 (ALENLVVLNAA) lie on the Lumenal side of the membrane. The helical transmembrane segment at 758–778 (SVAGAHGILSFLVFFCAAWYI) threads the bilayer. Topologically, residues 779-781 (KGR) are cytoplasmic. The helical transmembrane segment at 782–803 (LVPGAAYALYGVWPLLLLLLAL) threads the bilayer. The Lumenal portion of the chain corresponds to 804 to 813 (PPRAYAMDRE). The helical transmembrane segment at 814–834 (MAASCGGAVFVGLILLTLSPH) threads the bilayer. Topologically, residues 835-838 (YKLF) are cytoplasmic. Residues 839–859 (LARLIWWLQYFITRAEAHLQV) traverse the membrane as a helical segment. Topologically, residues 860–881 (WIPPLNVRGGRDAVILLTCAIH) are lumenal. A helical membrane pass occupies residues 882–902 (PELIFTITKILLAILGPLMVL). The 124-residue stretch at 903–1026 (QAGITKVPYF…SLEGQGWRLL (124 aa)) folds into the Peptidase C18 domain. The Cytoplasmic portion of the chain corresponds to 903–1657 (QAGITKVPYF…CMSADLEVVT (755 aa)). The interval 904–1206 (AGITKVPYFV…PVESMETTMR (303 aa)) is protease NS2-3. Cys922 carries S-palmitoyl cysteine; by host lipidation. The segment at 929-949 (AGGHYVQMALMKLAALTGTYV) is interaction with host SCPS1. Active-site for protease NS2 activity; shared with dimeric partner residues include His952, Glu972, and Cys993. The Peptidase S29 domain maps to 1027-1208 (APITAYSQQT…ESMETTMRSP (182 aa)). Catalysis depends on charge relay system; for serine protease NS3 activity residues His1083 and Asp1107. 2 residues coordinate Zn(2+): Cys1123 and Cys1125. Ser1165 functions as the Charge relay system; for serine protease NS3 activity in the catalytic mechanism. Zn(2+)-binding residues include Cys1171 and His1175. The Helicase ATP-binding domain maps to 1217 to 1369 (PAVPQTFQVA…PNIEEVALSS (153 aa)). 1230 to 1237 (APTGSGKS) is a binding site for ATP. The Mg(2+) site is built by Ser1237 and Glu1317. The DECH box motif lies at 1316–1319 (DECH). The RNA-binding stretch occupies residues 1486 to 1497 (QRRGRTGRGRMG). A helical transmembrane segment spans residues 1658–1678 (STWVLVGGVLAALAAYCLTTG). Positions 1679–1690 (SVVIVGRIILSG) are NS3-binding. Topologically, residues 1679–1805 (SVVIVGRIIL…SITSPLTTQH (127 aa)) are cytoplasmic. Residues 1806 to 1826 (TLLFNILGGWVAAQLAPPSAA) form a helical membrane-spanning segment. Residues 1827-1828 (SA) lie on the Lumenal side of the membrane. Residues 1829–1849 (FVGAGIAGAAVGSIGLGKVLV) traverse the membrane as a helical segment. Positions 1833-1861 (GIAGAAVGSIGLGKVLVDILAGYGAGVAG) are glycine zipper. Position 1850 (Asp1850) is a topological domain, cytoplasmic. A helical transmembrane segment spans residues 1851-1871 (ILAGYGAGVAGALVAFKVMSG). The Lumenal portion of the chain corresponds to 1872–1881 (EMPSTEDLVN). A helical transmembrane segment spans residues 1882–1902 (LLPAILSPGALVVGVVCAAIL). The Cytoplasmic portion of the chain corresponds to 1903–1972 (RRHVGPGEGA…WINEDCSTPC (70 aa)). S-palmitoyl cysteine; by host attachment occurs at residues Cys1968 and Cys1972. Residues 1973–2003 (SGSWLRDVWDWICTVLTDFKTWLQSKLLPRL) lie within the membrane without spanning it. The tract at residues 1978-1998 (RDVWDWICTVLTDFKTWLQSK) is membrane-binding. Over 2004-2989 (PGVPFFSCQR…YHSLSRARPR (986 aa)) the chain is Cytoplasmic. The segment at 2005–2221 (GVPFFSCQRG…KATCTTRHDS (217 aa)) is RNA-binding. Positions 2011, 2029, 2031, and 2052 each coordinate Zn(2+). Residues 2120–2208 (EFFTEVDGVR…ASSSASQLSA (89 aa)) form an FKBP8-binding region. The interval 2120–2332 (EFFTEVDGVR…PIPPPRRKRT (213 aa)) is transcriptional activation. The interval 2135 to 2139 (PACKP) is interaction with non-structural protein 4A. Positions 2187 to 2219 (KRRLARGSPPSLASSSASQLSAPSLKATCTTRH) are disordered. Residues 2189–2441 (RLARGSPPSL…PCAAEETKLP (253 aa)) are interaction with host SKP2. A Phosphoserine; by host; in p56 modification is found at Ser2194. The span at 2194 to 2211 (SPPSLASSSASQLSAPSL) shows a compositional bias: low complexity. The residue at position 2197 (Ser2197) is a Phosphoserine; by host; in p58. Ser2201 is modified (phosphoserine; by host; in p56 and p58, regulates intracellular NS5A distribution). Phosphoserine; by host; in p58 is present on residues Ser2204, Ser2207, and Ser2210. ISDR stretches follow at residues 2206–2245 (LSAP…TRVE) and 2210–2249 (SLKA…SENK). The interval 2210–2275 (SLKATCTTRH…REVSVPAEIL (66 aa)) is EIF2AK2/PKR-binding. The interval 2249 to 2306 (KVVILDSFEPLQAEEDEREVSVPAEILRRSRKFPRAMPIWARPDYNPPLLESWKDPDY) is NS4B-binding. The short motif at 2322 to 2325 (PPIP) is the SH3-binding element. Residues 2326-2334 (PPRRKRTVV) carry the Nuclear localization signal motif. Positions 2332–2441 (TVVLSESTVS…PCAAEETKLP (110 aa)) are interaction with host IFI27. A Glycyl lysine isopeptide (Lys-Gly) (interchain with G-Cter in ubiquitin) cross-link involves residue Lys2350. A compositionally biased stretch (polar residues) spans 2351–2371 (TFGSSESSAVDSGTATASPDQ). The segment at 2351 to 2407 (TFGSSESSAVDSGTATASPDQPSDDGDAGSDVESYSSMPPLEGEPGDPDLSDGSWST) is disordered. The interval 2354–2377 (SSESSAVDSGTATASPDQPSDDGD) is V3. Ser2448 and Ser2461 each carry phosphoserine; by host. One can recognise a RdRp catalytic domain in the interval 2633-2751 (PMGFAYDTRC…ICESAGTQED (119 aa)). Mg(2+) contacts are provided by Asp2639, Asp2737, and Asp2738. The helical transmembrane segment at 2990–3010 (WFMWCLLLLSVGVGIYLLPNR) threads the bilayer.

This sequence belongs to the hepacivirus polyprotein family. In terms of assembly, homooligomer. Interacts with E1 (via C-terminus). Interacts with the non-structural protein 5A. Interacts (via N-terminus) with host STAT1 (via SH2 domain); this interaction results in decreased STAT1 phosphorylation and ubiquitin-mediated proteasome-dependent STAT1 degradation, leading to decreased IFN-stimulated gene transcription. Interacts with host STAT3; this interaction constitutively activates STAT3. Interacts with host LTBR receptor. Interacts with host TNFRSF1A receptor and possibly induces apoptosis. Interacts with host HNRPK. Interacts with host YWHAE. Interacts with host UBE3A/E6AP. Interacts with host DDX3X. Interacts with host APOA2. Interacts with host RXRA protein. Interacts with host SP110 isoform 3/Sp110b; this interaction sequesters the transcriptional corepressor SP110 away from the nucleus. Interacts with host CREB3 nuclear transcription protein; this interaction triggers cell transformation. Interacts with host ACY3. Interacts with host C1QR1. Interacts with host RBM24; this interaction, which enhances the interaction of the mature core protein with 5'-UTR, may inhibit viral translation and favor replication. Interacts with host EIF2AK2/PKR; this interaction induces the autophosphorylation of EIF2AK2. Part of the viral assembly initiation complex composed of NS2, E1, E2, NS3, NS4A, NS5A and the mature core protein. As to quaternary structure, forms a heterodimer with envelope glycoprotein E2. Interacts with mature core protein. Interacts with protease NS2. The heterodimer E1/E2 interacts with host CLDN1; this interaction plays a role in viral entry into host cell. Interacts with host SPSB2 (via C-terminus). Part of the viral assembly initiation complex composed of NS2, E1, E2, NS3, NS4A, NS5A and the mature core protein. Interacts with human PLSCR1. Interacts with host NEURL3; this interaction prevents E1 binding to glycoprotein E2. Forms a heterodimer with envelope glycoprotein E1. Interacts with host CD81 and SCARB1 receptors; these interactions play a role in viral entry into host cell. Interacts with host EIF2AK2/PKR; this interaction inhibits EIF2AK2 and probably allows the virus to evade the innate immune response. Interacts with host CD209/DC-SIGN and CLEC4M/DC-SIGNR. Interact with host SPCS1; this interaction is essential for viral particle assembly. Interacts with protease NS2. The heterodimer E1/E2 interacts with host CLDN1; this interaction plays a role in viral entry into host cell. Part of the viral assembly initiation complex composed of NS2, E1, E2, NS3, NS4A, NS5A and the mature core protein. Interacts with host SLC3A2/4F2hc; the interaction may facilitate viral entry into host cell. Interacts with human PLSCR1. In terms of assembly, homohexamer. Homoheptamer. Interacts with protease NS2. As to quaternary structure, homodimer. Interacts with host SPCS1; this interaction is essential for viral particle assembly. Interacts with envelope glycoprotein E1. Interacts with envelope glycoprotein E2. Interacts with viroporin p7. Interacts with serine protease/helicase NS3. Part of the replication complex composed of NS2, NS3, NS4A, NS4B, NS5A and the RNA-directed RNA polymerase embedded in an ER-derived membranous web. Part of the viral assembly initiation complex composed of NS2, E1, E2, NS3, NS4A, NS5A and the mature core protein. Interacts with protease NS2. Interacts with non-structural protein 4A; this interaction stabilizes the folding of NS3 serine protease. NS3-NS4A interaction is essential for NS3 activation and allows membrane anchorage of the latter. NS3/NS4A complex also prevents phosphorylation of host IRF3, thus preventing the establishment of dsRNA induced antiviral state. Interacts with host MAVS; this interaction leads to the cleavage and inhibition of host MAVS. Interacts with host TICAM1; this interaction leads to the cleavage and inhibition of host TICAM1. Interacts with host TANK-binding kinase/TBK1; this interaction results in the inhibition of the association between TBK1 and IRF3, which leads to the inhibition of IRF3 activation. Interacts with host RBM24. Part of the replication complex composed of NS2, NS3, NS4A, NS4B, NS5A and the RNA-directed RNA polymerase embedded in an ER-derived membranous web. Part of the viral assembly initiation complex composed of NS2, E1, E2, NS3, NS4A, NS5A and the mature core protein. In terms of assembly, monomer. Homodimer; dimerization is required for RNA-binding. Interacts with the mature core protein. Interacts with host GRB2. Interacts with host BIN1. Interacts with host PIK3R1. Interacts with host SRCAP. Interacts with host FKBP8. Interacts with host VAPB. Interacts with host EIF2AK2/PKR; this interaction leads to disruption of EIF2AK2 dimerization by NS5A and probably allows the virus to evade the innate immune response. Interacts (via N-terminus) with host PACSIN2 (via N-terminus); this interaction attenuates protein kinase C alpha-mediated phosphorylation of PACSIN2 by disrupting the interaction between PACSIN2 and PRKCA. Interacts (via N-terminus) with host SRC kinase (via SH2 domain). Interacts with most Src-family kinases. Interacts with host IFI27 and SKP2; promotes the ubiquitin-mediated proteasomal degradation of NS5A. Interacts (via N-terminus) with non-structural protein 4A. Interacts with non-structural protein 4B. Interacts with RNA-directed RNA polymerase. Part of the replication complex composed of NS2, NS3, NS4A, NS4B, NS5A and the RNA-directed RNA polymerase embedded in an ER-derived membranous web. Interacts with host GPS2. Interacts with host TNFRSF21; this interaction allows the modulation by the virus of JNK, p38 MAPK, STAT3, and Akt signaling pathways in a DR6-dependent manner. Interacts (via N-terminus) with host CIDEB (via N-terminus); this interaction seems to regulate the association of HCV particles with APOE. Interacts with host CHKA/Choline Kinase-alpha; CHKA bridges host PI4KA and NS5A and potentiates NS5A-stimulated PI4KA activity, which then facilitates the targeting of the ternary complex to the ER for viral replication. Interacts with host SPSB2 (via C-terminus); this interaction targets NS5A for ubiquitination and degradation. Part of the viral assembly initiation complex composed of NS2, E1, E2, NS3, NS4A, NS5A and the mature core protein. Requires Zn(2+) as cofactor. Mg(2+) is required as a cofactor. Specific enzymatic cleavages in vivo yield mature proteins. The structural proteins, core, E1, E2 and p7 are produced by proteolytic processing by host signal peptidases. The core protein precursor is synthesized as a 23 kDa, which is retained in the ER membrane through the hydrophobic signal peptide. Cleavage by the signal peptidase releases the 21 kDa mature core protein. The cleavage of the core protein precursor occurs between aminoacids 176 and 188 but the exact cleavage site is not known. Some degraded forms of the core protein appear as well during the course of infection. The other proteins (p7, NS2, NS3, NS4A, NS4B, NS5A and NS5B) are cleaved by the viral proteases. Autoprocessing between NS2 and NS3 is mediated by the NS2 cysteine protease catalytic domain and regulated by the NS3 N-terminal domain. In terms of processing, phosphorylated by host PKC and PKA. Post-translationally, ubiquitinated; mediated by UBE3A and leading to core protein subsequent proteasomal degradation. Highly N-glycosylated. In terms of processing, palmitoylation is required for NS2/3 autoprocessing and E2 recruitment to membranes. Post-translationally, palmitoylated. This modification may play a role in its polymerization or in protein-protein interactions. Cleaved by host caspases which are probably activated by the viral infection. In terms of processing, ubiquitinated. Ubiquitination, most probably at Lys-2350, mediated by host IFI27 and SKP2 leads to proteasomal degradation, restricting viral infection. Ubiquitination by host TRIM22 leads to interruption of viral replication. Post-translationally, phosphorylated on serines in a basal form termed p56. p58 is a hyperphosphorylated form of p56. p56 and p58 coexist in the cell in roughly equivalent amounts. Hyperphosphorylation is dependent on the presence of NS4A. Host CSNK1A1/CKI-alpha or RPS6KB1 kinases may be responsible for NS5A phosphorylation. Tyrosine phosphorylation is essential for the interaction with host SRC. In terms of processing, the N-terminus is phosphorylated by host PRK2/PKN2.

The protein localises to the host endoplasmic reticulum membrane. It is found in the host mitochondrion membrane. Its subcellular location is the virion. It localises to the host cytoplasm. The protein resides in the host nucleus. The protein localises to the host lipid droplet. It is found in the virion membrane. Its subcellular location is the host mitochondrion. It localises to the host cell membrane. The protein resides in the host perinuclear region. It catalyses the reaction Hydrolysis of four peptide bonds in the viral precursor polyprotein, commonly with Asp or Glu in the P6 position, Cys or Thr in P1 and Ser or Ala in P1'.. The catalysed reaction is a ribonucleoside 5'-triphosphate + H2O = a ribonucleoside 5'-diphosphate + phosphate + H(+). The enzyme catalyses ATP + H2O = ADP + phosphate + H(+). It carries out the reaction RNA(n) + a ribonucleoside 5'-triphosphate = RNA(n+1) + diphosphate. Its activity is regulated as follows. Inhibited by the antiviral drug hexamethylene amiloride. Inhibition by amantadine appears to be genotype-dependent. Also inhibited by long-alkyl-chain iminosugar derivatives. Activity is up-regulated by PRK2/PKN2-mediated phosphorylation. Functionally, packages viral RNA to form a viral nucleocapsid, and promotes virion budding. Participates in the viral particle production as a result of its interaction with the non-structural protein 5A. Binds RNA and may function as a RNA chaperone to induce the RNA structural rearrangements taking place during virus replication. Modulates viral translation initiation by interacting with viral IRES and 40S ribosomal subunit. Affects various cell signaling pathways, host immunity and lipid metabolism. Prevents the establishment of cellular antiviral state by blocking the interferon-alpha/beta (IFN-alpha/beta) and IFN-gamma signaling pathways and by blocking the formation of phosphorylated STAT1 and promoting ubiquitin-mediated proteasome-dependent degradation of STAT1. Activates STAT3 leading to cellular transformation. Regulates the activity of cellular genes, including c-myc and c-fos. May repress the promoter of p53, and sequester CREB3 and SP110 isoform 3/Sp110b in the cytoplasm. Represses cell cycle negative regulating factor CDKN1A, thereby interrupting an important check point of normal cell cycle regulation. Targets transcription factors involved in the regulation of inflammatory responses and in the immune response: suppresses NF-kappa-B activation, and activates AP-1. Binds to dendritic cells (DCs) via C1QR1, resulting in down-regulation of T-lymphocytes proliferation. Alters lipid metabolism by interacting with hepatocellular proteins involved in lipid accumulation and storage. Induces up-regulation of FAS promoter activity, and thereby contributes to the increased triglyceride accumulation in hepatocytes (steatosis). In terms of biological role, forms a heterodimer with envelope glycoprotein E2, which mediates virus attachment to the host cell, virion internalization through clathrin-dependent endocytosis and fusion with host membrane. Fusion with the host cell is most likely mediated by both E1 and E2, through conformational rearrangements of the heterodimer required for fusion rather than a classical class II fusion mechanism. E1/E2 heterodimer binds host apolipoproteins such as APOB and APOE thereby forming a lipo-viro-particle (LVP). APOE associated to the LVP allows the initial virus attachment to cell surface receptors such as the heparan sulfate proteoglycans (HSPGs), syndecan-1 (SDC1), syndecan-1 (SDC2), the low-density lipoprotein receptor (LDLR) and scavenger receptor class B type I (SCARB1). The cholesterol transfer activity of SCARB1 allows E2 exposure and binding of E2 to SCARB1 and the tetraspanin CD81. E1/E2 heterodimer binding on CD81 activates the epithelial growth factor receptor (EGFR) signaling pathway. Diffusion of the complex E1-E2-EGFR-SCARB1-CD81 to the cell lateral membrane allows further interaction with Claudin 1 (CLDN1) and occludin (OCLN) to finally trigger HCV entry. Forms a heterodimer with envelope glycoprotein E1, which mediates virus attachment to the host cell, virion internalization through clathrin-dependent endocytosis and fusion with host membrane. Fusion with the host cell is most likely mediated by both E1 and E2, through conformational rearrangements of the heterodimer required for fusion rather than a classical class II fusion mechanism. The interaction between envelope glycoprotein E2 and host apolipoprotein E/APOE allows the proper assembly, maturation and infectivity of the viral particles. This interaction is probably promoted via the up-regulation of cellular autophagy by the virus. E1/E2 heterodimer binds host apolipoproteins such as APOB and APOE thereby forming a lipo-viro-particle (LVP). APOE associated to the LVP allows the initial virus attachment to cell surface receptors such as the heparan sulfate proteoglycans (HSPGs), syndecan-1 (SDC1), syndecan-1 (SDC2), the low-density lipoprotein receptor (LDLR) and scavenger receptor class B type I (SCARB1). The cholesterol transfer activity of SCARB1 allows E2 exposure and binding of E2 to SCARB1 and the tetraspanin CD81. E1/E2 heterodimer binding on CD81 activates the epithelial growth factor receptor (EGFR) signaling pathway. Diffusion of the complex E1-E2-EGFR-SCARB1-CD81 to the cell lateral membrane allows further interaction with Claudin 1 (CLDN1) and occludin (OCLN) to finally trigger HCV entry. Inhibits host EIF2AK2/PKR activation, preventing the establishment of an antiviral state. Viral ligand for CD209/DC-SIGN and CLEC4M/DC-SIGNR, which are respectively found on dendritic cells (DCs), and on liver sinusoidal endothelial cells and macrophage-like cells of lymph node sinuses. These interactions allow the capture of circulating HCV particles by these cells and subsequent facilitated transmission to permissive cells such as hepatocytes and lymphocyte subpopulations. The interaction between E2 and host amino acid transporter complex formed by SLC3A2 and SLC7A5/LAT1 may facilitate viral entry into host cell. Its function is as follows. Ion channel protein that acts as a viroporin and plays an essential role in the assembly, envelopment and secretion of viral particles. Regulates the host cell secretory pathway, which induces the intracellular retention of viral glycoproteins and favors assembly of viral particles. Creates a pore in acidic organelles and releases Ca(2+) and H(+) in the cytoplasm of infected cells, leading to a productive viral infection. High levels of cytoplasmic Ca(2+) may trigger membrane trafficking and transport of viral ER-associated proteins to viroplasms, sites of viral genome replication. This ionic imbalance induces the assembly of the inflammasome complex, which triggers the maturation of pro-IL-1beta into IL-1beta through the action of caspase-1. Targets also host mitochondria and induces mitochondrial depolarization. In addition of its role as a viroporin, acts as a lipid raft adhesion factor. Functionally, cysteine protease required for the proteolytic auto-cleavage between the non-structural proteins NS2 and NS3. The N-terminus of NS3 is required for the function of NS2 protease (active region NS2-3). Promotes the initiation of viral particle assembly by mediating the interaction between structural and non-structural proteins. In terms of biological role, displays three enzymatic activities: serine protease with a chymotrypsin-like fold, NTPase and RNA helicase. NS3 serine protease, in association with NS4A, is responsible for the cleavages of NS3-NS4A, NS4A-NS4B, NS4B-NS5A and NS5A-NS5B. The NS3/NS4A complex prevents phosphorylation of host IRF3, thus preventing the establishment of dsRNA induced antiviral state. The NS3/NS4A complex induces host amino acid transporter component SLC3A2, thus contributing to HCV propagation. NS3 RNA helicase binds to RNA and unwinds both dsDNA and dsRNA in the 3' to 5' direction, and likely resolves RNA complicated stable secondary structures in the template strand. Binds a single ATP and catalyzes the unzipping of a single base pair of dsRNA. Inhibits host antiviral proteins TBK1 and IRF3 thereby preventing the establishment of an antiviral state. Cleaves host MAVS/CARDIF thereby preventing the establishment of an antiviral state. Cleaves host TICAM1/TRIF, thereby disrupting TLR3 signaling and preventing the establishment of an antiviral state. Peptide cofactor which forms a non-covalent complex with the N-terminal of NS3 serine protease. The NS3/NS4A complex prevents phosphorylation of host IRF3, thus preventing the establishment of dsRNA induced antiviral state. The NS3/NS4A complex induces host amino acid transporter component SLC3A2, thus contributing to HCV propagation. Its function is as follows. Induces a specific membrane alteration that serves as a scaffold for the virus replication complex. This membrane alteration gives rise to the so-called ER-derived membranous web that contains the replication complex. NS4B self-interaction contributes to its function in membranous web formation. Promotes host TRIF protein degradation in a CASP8-dependent manner thereby inhibiting host TLR3-mediated interferon signaling. Disrupts the interaction between STING and TBK1 contributing to the inhibition of interferon signaling. Functionally, phosphorylated protein that is indispensable for viral replication and assembly. Both hypo- and hyperphosphorylated states are required for the viral life cycle. The hyperphosphorylated form of NS5A is an inhibitor of viral replication. Involved in RNA-binding and especially in binding to the viral genome. Zinc is essential for RNA-binding. Participates in the viral particle production as a result of its interaction with the viral mature core protein. Its interaction with host VAPB may target the viral replication complex to vesicles. Down-regulates viral IRES translation initiation. Mediates interferon resistance, presumably by interacting with and inhibiting host EIF2AK2/PKR. Prevents BIN1-induced apoptosis. Acts as a transcriptional activator of some host genes important for viral replication when localized in the nucleus. Via the interaction with host PACSIN2, modulates lipid droplet formation in order to promote virion assembly. Modulates TNFRSF21/DR6 signaling pathway for viral propagation. In terms of biological role, RNA-dependent RNA polymerase that performs primer-template recognition and RNA synthesis during viral replication. Initiates RNA transcription/replication at a flavin adenine dinucleotide (FAD), resulting in a 5'- FAD cap on viral RNAs. In this way, recognition of viral 5' RNA by host pattern recognition receptors can be bypassed, thereby evading activation of antiviral pathways. The sequence is that of Genome polyprotein from Hepatitis C virus genotype 1b (isolate Con1) (HCV).